A 258-amino-acid polypeptide reads, in one-letter code: Regulatory protein RecX (258 aa).

It belongs to the RecX family.

Its subcellular location is the cytoplasm. In terms of biological role, modulates RecA activity. The sequence is that of Regulatory protein RecX from Streptococcus pyogenes serotype M3 (strain ATCC BAA-595 / MGAS315).